Reading from the N-terminus, the 383-residue chain is Hippurate hydrolase (383 aa).

This sequence belongs to the peptidase M20 family.

It catalyses the reaction N-benzoylglycine + H2O = benzoate + glycine. Functionally, cleaves hippuric acid into benzoic acid and glycine. The chain is Hippurate hydrolase from Campylobacter jejuni subsp. jejuni serotype O:2 (strain ATCC 700819 / NCTC 11168).